A 143-amino-acid chain; its full sequence is Adrenodoxin, mitochondrial (143 aa).

A mitochondrion-targeting transit peptide spans 1–19 (CSAVAVRTLRPLSLSARAA). The region spanning 26 to 130 (ITVHFINRDG…NMTVRVPEAV (105 aa)) is the 2Fe-2S ferredoxin-type domain. The [2Fe-2S] cluster site is built by C65, C71, C74, and C111.

The protein belongs to the adrenodoxin/putidaredoxin family. [2Fe-2S] cluster is required as a cofactor.

Its subcellular location is the mitochondrion matrix. Functionally, essential for the synthesis of various steroid hormones. Participates in the reduction of mitochondrial cytochrome P450 for steroidogenesis. Transfers electrons from adrenodoxin reductase to CYP11A1, a cytochrome P450 that catalyzes cholesterol side-chain cleavage. Does not form a ternary complex with adrenodoxin reductase and CYP11A1 but shuttles between the two enzymes to transfer electrons. The sequence is that of Adrenodoxin, mitochondrial (FDX1) from Gallus gallus (Chicken).